Reading from the N-terminus, the 655-residue chain is p-hydroxybenzoic acid efflux pump subunit AaeB (655 aa).

11 helical membrane-spanning segments follow: residues Phe-13–Leu-33, Trp-38–Pro-58, Leu-69–Ile-89, Leu-93–Val-113, Trp-121–Leu-141, Glu-152–Ile-172, Leu-370–Val-390, Phe-407–Pro-427, Gln-431–Val-451, Met-459–Phe-479, and Phe-482–Leu-502.

Belongs to the aromatic acid exporter ArAE (TC 2.A.85) family.

It localises to the cell inner membrane. Its function is as follows. Forms an efflux pump with AaeA. Could function as a metabolic relief valve, allowing to eliminate certain compounds when they accumulate to high levels in the cell. This is p-hydroxybenzoic acid efflux pump subunit AaeB from Escherichia coli (strain SMS-3-5 / SECEC).